The following is a 128-amino-acid chain: MARVKRAVNAHKKRREVLEKASGYRGQRSRLYRKAKEQMLHSYTYSYNDRRKKKGDFRRLWIQRINAASRANGLTYNRFIQGLKAAEVEVDRRMLAELAVSDENAFAALVQVAKDALPEDTSAPRTAA.

The protein belongs to the bacterial ribosomal protein bL20 family.

In terms of biological role, binds directly to 23S ribosomal RNA and is necessary for the in vitro assembly process of the 50S ribosomal subunit. It is not involved in the protein synthesizing functions of that subunit. This chain is Large ribosomal subunit protein bL20, found in Kocuria rhizophila (strain ATCC 9341 / DSM 348 / NBRC 103217 / DC2201).